The primary structure comprises 154 residues: 6,7-dimethyl-8-ribityllumazine synthase (154 aa).

5-amino-6-(D-ribitylamino)uracil is bound by residues phenylalanine 22, 56–58 (AFE), and 80–82 (TVI). 85–86 (AT) contacts (2S)-2-hydroxy-3-oxobutyl phosphate. The Proton donor role is filled by histidine 88. Residue phenylalanine 113 coordinates 5-amino-6-(D-ribitylamino)uracil. Residue arginine 127 participates in (2S)-2-hydroxy-3-oxobutyl phosphate binding.

Belongs to the DMRL synthase family. In terms of assembly, forms an icosahedral capsid composed of 60 subunits, arranged as a dodecamer of pentamers.

It carries out the reaction (2S)-2-hydroxy-3-oxobutyl phosphate + 5-amino-6-(D-ribitylamino)uracil = 6,7-dimethyl-8-(1-D-ribityl)lumazine + phosphate + 2 H2O + H(+). It functions in the pathway cofactor biosynthesis; riboflavin biosynthesis; riboflavin from 2-hydroxy-3-oxobutyl phosphate and 5-amino-6-(D-ribitylamino)uracil: step 1/2. Functionally, catalyzes the formation of 6,7-dimethyl-8-ribityllumazine by condensation of 5-amino-6-(D-ribitylamino)uracil with 3,4-dihydroxy-2-butanone 4-phosphate. This is the penultimate step in the biosynthesis of riboflavin. The protein is 6,7-dimethyl-8-ribityllumazine synthase of Bacillus amyloliquefaciens (Bacillus velezensis).